The sequence spans 95 residues: Putative ESAT-6-like protein X (95 aa).

Residues 72-95 (HGQKVQRASSSMADTDRSVSSAWS) form a disordered region.

This sequence belongs to the WXG100 family.

The sequence is that of Putative ESAT-6-like protein X from Mycobacterium leprae (strain TN).